Reading from the N-terminus, the 792-residue chain is Ubiquitin carboxyl-terminal hydrolase 10 (792 aa).

A DHR2-binding module region spans residues 2–27 (TTQESIKPLVDRILSNPLQFNAAMIS). Disordered stretches follow at residues 64–87 (AESK…NTVP) and 103–320 (KDAA…SITP). Positions 107 to 129 (DATGAKKSAELSTELSTEPPSSS) are enriched in low complexity. The segment at 109–145 (TGAKKSAELSTELSTEPPSSSSEDDKVGKEEEEEGEI) is SIR4-binding module. The segment covering 144–171 (EIFHEARDYVEPRKASLKERDNADKGDG) has biased composition (basic and acidic residues). The UTP22-binding module stretch occupies residues 167-208 (DKGDGEDIGEDIGEDIGEDIGEDIGEDIGENLGSPLATIDDS). The span at 172–195 (EDIGEDIGEDIGEDIGEDIGEDIG) shows a compositional bias: acidic residues. Positions 211–220 (ENEKEKRKEL) are enriched in basic and acidic residues. The segment covering 226-241 (SDDEIEDDEDEDDMDY) has biased composition (acidic residues). Polar residues predominate over residues 288–297 (VNNTKENGNR). In terms of domain architecture, USP spans 362 to 733 (RGLLNHGVTC…NAYYLLYTRL (372 aa)). Cys-371 functions as the Nucleophile in the catalytic mechanism. Positions 526–563 (LDPNSDLSSDSINGTSATTSTTTSNAATKPSLSSSSSV) are disordered. Polar residues predominate over residues 530 to 539 (SDLSSDSING). Residues 540–563 (TSATTSTTTSNAATKPSLSSSSSV) show a composition bias toward low complexity. The active-site Proton acceptor is His-691. The span at 749–766 (TGNVTSKSKQEQAVNEPN) shows a compositional bias: polar residues. A disordered region spans residues 749–792 (TGNVTSKSKQEQAVNEPNNRPLKINSKKNNRKKWKKNKKRKFTK). Over residues 773-792 (NSKKNNRKKWKKNKKRKFTK) the composition is skewed to basic residues.

Belongs to the peptidase C19 family. In terms of assembly, interacts with SIR4. Interacts with the proliferating-cell nuclear antigen PCNA/POL30. Interacts with DHR2 and UTP22.

The protein resides in the nucleus. The protein localises to the chromosome. It is found in the telomere. It localises to the nucleolus. It catalyses the reaction Thiol-dependent hydrolysis of ester, thioester, amide, peptide and isopeptide bonds formed by the C-terminal Gly of ubiquitin (a 76-residue protein attached to proteins as an intracellular targeting signal).. In terms of biological role, deubiquitinating enzyme involved in telomere and HM loci silencing, which is the repression of chromatin structure which leads to a stop in the transcription of nearby genes. Targets histone H2B for deubiquitination, thus helping to localize SIR2 to the telomere. At silent chromatin, including telomeres and the rDNA locus, not only maintains low H2B 'Lys-123' ubiquitination (H2BK123Ub), but also low H3 'Lys-4' and 'Lys-79' methylation (H3K4me and H3K79me, respectively). Controls the proliferating-cell nuclear antigen PCNA/POL30 deubiquitination which is crucial for keeping TLS polymerases in check as well as for down-regulating the error-free bypass. Deubiquitinates and stabilizes RPA190, the largest subunit of RNA polymerase I, to achieve optimal levels of ribosomes and cell growth. Also protects nutrient transporters such as GAP1 from ubiquitin-dependent endocytosis. In Saccharomyces cerevisiae (strain ATCC 204508 / S288c) (Baker's yeast), this protein is Ubiquitin carboxyl-terminal hydrolase 10 (UBP10).